The primary structure comprises 510 residues: Pectinesterase 2 (510 aa).

The first 19 residues, 1–19 (MALRILITVSLVLFSLSHT), serve as a signal peptide directing secretion. N110 and N158 each carry an N-linked (GlcNAc...) asparagine glycan. Positions 275 and 305 each coordinate substrate. D328 (proton donor) is an active-site residue. C342 and C362 form a disulfide bridge. D349 functions as the Nucleophile in the catalytic mechanism. Residues N371 and N385 are each glycosylated (N-linked (GlcNAc...) asparagine). Substrate contacts are provided by R416 and W418.

The protein in the N-terminal section; belongs to the PMEI family. In the C-terminal section; belongs to the pectinesterase family. In terms of tissue distribution, expressed at low levels in young leaves, young bark, young fruit, mature fruit vesicles, shoots and flower buds, young bark and juice vesicles. In both leaf and fruit abscission zones, and mature leaves, expression was initially undetectable but increased markedly following ethylene treatment.

The protein localises to the secreted. It is found in the cell wall. The enzyme catalyses [(1-&gt;4)-alpha-D-galacturonosyl methyl ester](n) + n H2O = [(1-&gt;4)-alpha-D-galacturonosyl](n) + n methanol + n H(+). The protein operates within glycan metabolism; pectin degradation; 2-dehydro-3-deoxy-D-gluconate from pectin: step 1/5. Acts in the modification of cell walls via demethylesterification of cell wall pectin. This chain is Pectinesterase 2 (PECS-2.1), found in Citrus sinensis (Sweet orange).